The primary structure comprises 239 residues: Fatty acid metabolism regulator protein (239 aa).

In terms of domain architecture, HTH gntR-type spans 6–74 (QSPAGFAEEY…HGKPTKVNNF (69 aa)). A DNA-binding region (H-T-H motif) is located at residues 34-53 (ERELSELIGVTRTTLREVLQ).

As to quaternary structure, homodimer.

It localises to the cytoplasm. In terms of biological role, multifunctional regulator of fatty acid metabolism. The sequence is that of Fatty acid metabolism regulator protein from Proteus mirabilis (strain HI4320).